Reading from the N-terminus, the 88-residue chain is Small ribosomal subunit protein uS15 (88 aa).

A compositionally biased stretch (polar residues) spans 1 to 20; it reads MLTTQDKQNIIKENQQSEGD. The interval 1-24 is disordered; it reads MLTTQDKQNIIKENQQSEGDTGSP.

The protein belongs to the universal ribosomal protein uS15 family. In terms of assembly, part of the 30S ribosomal subunit. Forms a bridge to the 50S subunit in the 70S ribosome, contacting the 23S rRNA.

Functionally, one of the primary rRNA binding proteins, it binds directly to 16S rRNA where it helps nucleate assembly of the platform of the 30S subunit by binding and bridging several RNA helices of the 16S rRNA. Its function is as follows. Forms an intersubunit bridge (bridge B4) with the 23S rRNA of the 50S subunit in the ribosome. In Francisella philomiragia subsp. philomiragia (strain ATCC 25017 / CCUG 19701 / FSC 153 / O#319-036), this protein is Small ribosomal subunit protein uS15.